The sequence spans 322 residues: Probable arabinan endo-1,5-alpha-L-arabinosidase A (322 aa).

Residues 1–19 (MYLPTLAASASLLVGVAHG) form the signal peptide. D34 functions as the Proton acceptor in the catalytic mechanism. Residue E201 is the Proton donor of the active site.

This sequence belongs to the glycosyl hydrolase 43 family.

The protein resides in the secreted. It catalyses the reaction Endohydrolysis of (1-&gt;5)-alpha-arabinofuranosidic linkages in (1-&gt;5)-arabinans.. It functions in the pathway glycan metabolism; L-arabinan degradation. Its function is as follows. Endo-1,5-alpha-L-arabinanase involved in degradation of pectin. Its preferred substrate is linear 1,5-alpha-L-arabinan. The protein is Probable arabinan endo-1,5-alpha-L-arabinosidase A (abnA) of Emericella nidulans (strain FGSC A4 / ATCC 38163 / CBS 112.46 / NRRL 194 / M139) (Aspergillus nidulans).